Here is a 156-residue protein sequence, read N- to C-terminus: Small ribosomal subunit protein uS7 (156 aa).

The protein belongs to the universal ribosomal protein uS7 family. As to quaternary structure, part of the 30S ribosomal subunit. Contacts proteins S9 and S11.

One of the primary rRNA binding proteins, it binds directly to 16S rRNA where it nucleates assembly of the head domain of the 30S subunit. Is located at the subunit interface close to the decoding center, probably blocks exit of the E-site tRNA. This is Small ribosomal subunit protein uS7 from Clostridium kluyveri (strain NBRC 12016).